Consider the following 404-residue polypeptide: Probable ketol-acid reductoisomerase, mitochondrial (404 aa).

The 191-residue stretch at 63–253 folds into the KARI N-terminal Rossmann domain; it reads TKENVWERSD…AVGSGFIYQT (191 aa). Residues 91 to 100, 115 to 120, and 153 to 157 contribute to the NADP(+) site; these read GYGSQGHGQG, RKDGAS, and SDAAQ. His178 is an active-site residue. The KARI C-terminal knotted domain maps to 254 to 401; that stretch reads TFKKEVISDL…EVVRSLRPEH (148 aa). Ser261 carries the post-translational modification Phosphoserine. Asp262, Glu266, Glu298, and Glu302 together coordinate Mg(2+). Ser324 contributes to the substrate binding site.

It belongs to the ketol-acid reductoisomerase family. The cofactor is Mg(2+).

The protein resides in the mitochondrion. The catalysed reaction is (2R)-2,3-dihydroxy-3-methylbutanoate + NADP(+) = (2S)-2-acetolactate + NADPH + H(+). It carries out the reaction (2R,3R)-2,3-dihydroxy-3-methylpentanoate + NADP(+) = (S)-2-ethyl-2-hydroxy-3-oxobutanoate + NADPH + H(+). Its pathway is amino-acid biosynthesis; L-isoleucine biosynthesis; L-isoleucine from 2-oxobutanoate: step 2/4. It participates in amino-acid biosynthesis; L-valine biosynthesis; L-valine from pyruvate: step 2/4. This is Probable ketol-acid reductoisomerase, mitochondrial (ilv5) from Schizosaccharomyces pombe (strain 972 / ATCC 24843) (Fission yeast).